Here is a 90-residue protein sequence, read N- to C-terminus: Phosphoribosyl-ATP pyrophosphatase (90 aa).

This sequence belongs to the PRA-PH family.

The protein localises to the cytoplasm. It carries out the reaction 1-(5-phospho-beta-D-ribosyl)-ATP + H2O = 1-(5-phospho-beta-D-ribosyl)-5'-AMP + diphosphate + H(+). It functions in the pathway amino-acid biosynthesis; L-histidine biosynthesis; L-histidine from 5-phospho-alpha-D-ribose 1-diphosphate: step 2/9. In Streptomyces griseus subsp. griseus (strain JCM 4626 / CBS 651.72 / NBRC 13350 / KCC S-0626 / ISP 5235), this protein is Phosphoribosyl-ATP pyrophosphatase.